Consider the following 485-residue polypeptide: Transcription factor E2FA (485 aa).

The span at M1–S11 shows a compositional bias: low complexity. Disordered stretches follow at residues M1–N69 and S114–T159. Residues S12–P26 show a composition bias toward pro residues. The segment covering S114–Q125 has biased composition (polar residues). A compositionally biased stretch (basic residues) spans K129 to G141. The span at N142–T159 shows a compositional bias: polar residues. The DNA-binding element occupies R167–G232. Positions S245–W286 form a coiled coil. Residues L249–L277 form a leucine-zipper region. The interval D435–W450 is retinoblastoma protein binding.

The protein belongs to the E2F/DP family. In terms of assembly, heterodimer with DP proteins. Interacts (via dimerization domain) preferentially with DPA, but also with DPB. Interacts with maize retinoblastoma-related protein RBR1. No interaction with E2FD. As to expression, highly expressed in the shoot apical meristem, emerging leaf primordia, and vascular tissues of young leaf primordia. Expressed in flowers, in epidermis and cortex of hypocotyls, and at lower levels in leaves.

The protein resides in the cytoplasm. The protein localises to the nucleus. In terms of biological role, transcription activator that binds DNA cooperatively with DP proteins through the E2 recognition site, 5'-TTTC[CG]CGC-3' found in the promoter region of a number of genes whose products are involved in cell cycle regulation or in DNA replication. The binding of retinoblastoma-related proteins represses transactivation. Regulates gene expression both positively and negatively. Activates the expression of E2FB. Involved in the control of cell-cycle progression from G1 to S phase. Stimulates cell proliferation and delays differentiation. The sequence is that of Transcription factor E2FA (E2FA) from Arabidopsis thaliana (Mouse-ear cress).